Here is a 92-residue protein sequence, read N- to C-terminus: Precursor of elicitor peptide 1 (92 aa).

Positions 1-69 are excised as a propeptide; that stretch reads MEKSDRRSEE…EKEEVVVTSR (69 aa). The interval 35–92 is disordered; the sequence is HQDSPTTSSPGTSKQPKEEKEDVTMEKEEVVVTSRATKVKAKQRGKEKVSSGRPGQHN. A compositionally biased stretch (polar residues) spans 37–48; the sequence is DSPTTSSPGTSK. Residues 49–64 are compositionally biased toward basic and acidic residues; sequence QPKEEKEDVTMEKEEV.

Belongs to the brassicaceae elicitor peptide family. Interacts with its receptor PEPR1.

In terms of biological role, elicitor of plant defense. Induces the production of plant defensin (PDF1.2) and of H(2)O(2). Promotes resistance to the root fungal pathogen P.irregulare. Triggers the expression of several PROSCOOP genes (e.g. PROSCOOP2, PROSCOOP7, PROSCOOP8, PROSCOOP12 and PROSCOOP13). This chain is Precursor of elicitor peptide 1, found in Arabidopsis thaliana (Mouse-ear cress).